A 254-amino-acid polypeptide reads, in one-letter code: Germin-like protein 4-1 (254 aa).

The signal sequence occupies residues 1–27 (MASRAFAAVFAAVALVVCSSVLPRALA). C37 and C52 form a disulfide bridge. The region spanning 67–220 (KALGVPGNTV…AFMIDKDQVD (154 aa)) is the Cupin type-1 domain. Residues H115, H117, E122, and H166 each contribute to the Mn(2+) site.

This sequence belongs to the germin family. As to quaternary structure, oligomer (believed to be a pentamer but probably hexamer).

It localises to the secreted. It is found in the extracellular space. The protein resides in the apoplast. Its function is as follows. May play a role in plant defense. Probably has no oxalate oxidase activity even if the active site is conserved. The polypeptide is Germin-like protein 4-1 (Oryza sativa subsp. japonica (Rice)).